The sequence spans 3411 residues: Genome polyprotein (3411 aa).

Residues 1–104 (MSGRKAQGKT…LSSRKRRSHD (104 aa)) lie on the Cytoplasmic side of the membrane. Residues 38-72 (PGPSRGVQGFISFFSFNILTGKKITAHLKRLWKML) are hydrophobic; homodimerization of capsid protein C. The propeptide at 102 to 121 (SHDVLTVQFLILGMLLMAGG) is ER anchor for the capsid protein C, removed in mature form by serine protease NS3. The chain crosses the membrane as a helical span at residues 105 to 125 (VLTVQFLILGMLLMAGGVTLV). Topologically, residues 126–244 (RKNRWLLLNV…GERQLQKIER (119 aa)) are extracellular. 2 N-linked (GlcNAc...) asparagine; by host glycosylation sites follow: asparagine 134 and asparagine 150. Residues 245–265 (WLVRNPFFAVTALAIAYLVGS) form a helical membrane-spanning segment. Residues 266 to 270 (NMTQR) lie on the Cytoplasmic side of the membrane. The helical transmembrane segment at 271–285 (VVIALLVLAVGPAYS) threads the bilayer. The Extracellular segment spans residues 286–730 (AHCIGITDRD…TVFGSAFQGL (445 aa)). Intrachain disulfides connect cysteine 288/cysteine 315, cysteine 345/cysteine 401, cysteine 345/cysteine 406, cysteine 359/cysteine 390, cysteine 377/cysteine 401, cysteine 377/cysteine 406, cysteine 467/cysteine 568, and cysteine 585/cysteine 615. Positions 383 to 396 (DRGWGNGCGLFGKG) are fusion peptide. A helical membrane pass occupies residues 731–751 (FGGLSWITKVIMGAVLIWVGI). At 752-757 (NTRNMT) the chain is on the extracellular side. Residues 758-778 (MSMSMILVGVIMMFLSLGVGA) traverse the membrane as a helical segment. Topologically, residues 779-1132 (DQGCAINFGK…LVRSWVTAGE (354 aa)) are extracellular. Intrachain disulfides connect cysteine 782/cysteine 793, cysteine 833/cysteine 921, cysteine 957/cysteine 1002, cysteine 1058/cysteine 1107, cysteine 1069/cysteine 1091, and cysteine 1090/cysteine 1094. 2 N-linked (GlcNAc...) asparagine; by host glycosylation sites follow: asparagine 908 and asparagine 986. Residues 1133-1153 (IHAVPFGLVSMMIAMEVVLRK) form a helical membrane-spanning segment. The Cytoplasmic portion of the chain corresponds to 1154–1201 (RQGPKQMLVGGMVLLGAMLVGQVTLLDLLKLTMAVGLHFHEMNNGGDA). A helical transmembrane segment spans residues 1202-1222 (MYMALIAAFSIRPGLLIGFGL). The Lumenal segment spans residues 1223 to 1287 (RTLWSPRERL…ILPLMALLTP (65 aa)). Residues 1288-1308 (VTMAEVRLATMLLCAVVIIGV) traverse the membrane as a helical segment. Over 1309-1355 (LHQNSKDTSMQKTIPLVALTLTSYLGLTQPFLGLCAFLATRIFGRRS) the chain is Cytoplasmic. A helical membrane pass occupies residues 1356–1376 (IPVNEALAAAGLVGVLAGLAF). The Lumenal portion of the chain corresponds to 1377-1378 (QE). The helical transmembrane segment at 1379 to 1399 (MENFLGPIAVGGILMMLVSVA) threads the bilayer. Residues 1400–1456 (GRVDGLELKKLGEVSWEEEAEISGSSARYDVALSEQGEFKLLSEEKVPWDQVVMTSL) are Cytoplasmic-facing. The interval 1407–1446 (LKKLGEVSWEEEAEISGSSARYDVALSEQGEFKLLSEEKV) is interacts with and activates NS3 protease. Positions 1457–1477 (ALVGAAIHPSALLLVLAGWLF) form an intramembrane region, helical. Topologically, residues 1478-2157 (HVKGARRSGD…RNALSMMPEA (680 aa)) are cytoplasmic. The 181-residue stretch at 1485-1665 (SGDVLWDIPT…EVKEEGKEEL (181 aa)) folds into the Peptidase S7 domain. Residues histidine 1537, aspartate 1561, and serine 1622 each act as charge relay system; for serine protease NS3 activity in the active site. In terms of domain architecture, Helicase ATP-binding spans 1669–1825 (PTMLKKGMTT…HSNGEIEDVQ (157 aa)). The segment at 1673–1676 (KKGM) is important for RNA-binding. 1682–1689 (YHPGAGKT) serves as a coordination point for ATP. Positions 1773-1776 (DEAH) match the DEAH box motif. Residues 1820–1997 (EIEDVQTDIP…VRGGMVAPLY (178 aa)) enclose the Helicase C-terminal domain. Lysine 1877 is subject to N6-acetyllysine; by host. A helical transmembrane segment spans residues 2158 to 2178 (MTIVMLFILAGLLTSGMVIFF). The Lumenal segment spans residues 2179–2186 (MSPKGISR). Positions 2187–2207 (MSMAMGTMAGCGYLMFLGGAK) form an intramembrane region, helical. Over 2208–2209 (PT) the chain is Lumenal. Residues 2210-2230 (HISYIMLIFFVLMVVVIPEPG) form a helical membrane-spanning segment. Topologically, residues 2231–2241 (QQRSIQDNQVA) are cytoplasmic. Residues 2242 to 2262 (YLIIGILTLVSVVAANELGML) traverse the membrane as a helical segment. Topologically, residues 2263 to 2293 (ERTKEDLFGKKNLIPSSASPWSWPDLDLKPG) are lumenal. The helical intramembrane region spans 2294-2314 (AAWTVYVGIVTILSPMLHHWI). The Lumenal segment spans residues 2315–2360 (KVEYGNLSLSGIAQSASVLSFMDKGIPFMKMNISVIILLVSGWNSI). Residues 2361-2380 (TVMPLLCGIGCAMLHWTLIL) traverse the membrane as a helical segment. Residues 2381–2421 (PGIKAQQSKLPQRRVFHGVAKNPVVDGNPTVDIEEAPEMPA) lie on the Cytoplasmic side of the membrane. The chain crosses the membrane as a helical span at residues 2422-2442 (LYEKKLALYLLLALSLASVAM). The Lumenal portion of the chain corresponds to 2443–2445 (CRT). The helical transmembrane segment at 2446-2466 (PFSLAEGIVLASAALGPLIEG) threads the bilayer. Residues 2467 to 3411 (NTSLLWNGPM…DADLQPGELI (945 aa)) lie on the Cytoplasmic side of the membrane. Residues 2507–2771 (GRANGKTLGE…DVILPIGTRS (265 aa)) enclose the mRNA cap 0-1 NS5-type MT domain. Serine 2562 lines the S-adenosyl-L-methionine pocket. Phosphoserine is present on serine 2562. The For 2'-O-MTase activity role is filled by lysine 2567. Glycine 2592, tryptophan 2593, threonine 2610, leucine 2611, aspartate 2637, and isoleucine 2638 together coordinate S-adenosyl-L-methionine. Aspartate 2652 serves as the catalytic For 2'-O-MTase activity. Residue isoleucine 2653 coordinates S-adenosyl-L-methionine. Catalysis depends on for 2'-O-MTase activity residues lysine 2688 and glutamate 2724. Residue tyrosine 2726 coordinates S-adenosyl-L-methionine. Residues 2878-2911 (RKIMKVVNRWLFRHLAREKNPRLCTKEEFIAKVR) carry the Nuclear localization signal motif. Residues glutamate 2945, histidine 2949, cysteine 2954, and cysteine 2957 each contribute to the Zn(2+) site. The RdRp catalytic domain maps to 3035–3187 (GGFYADDTAG…RPIDDRFGMA (153 aa)). The Zn(2+) site is built by histidine 3222, cysteine 3238, and cysteine 3357.

In the N-terminal section; belongs to the class I-like SAM-binding methyltransferase superfamily. mRNA cap 0-1 NS5-type methyltransferase family. In terms of assembly, homodimer. Interacts (via N-terminus) with host EXOC1 (via C-terminus); this interaction results in EXOC1 degradation through the proteasome degradation pathway. Forms heterodimers with envelope protein E in the endoplasmic reticulum and Golgi. As to quaternary structure, homodimer; in the endoplasmic reticulum and Golgi. Interacts with protein prM. Interacts with non-structural protein 1. In terms of assembly, homodimer; Homohexamer when secreted. Interacts with envelope protein E. Interacts (via N-terminus) with serine protease NS3. As to quaternary structure, forms a heterodimer with serine protease NS3. May form homooligomers. In terms of assembly, forms a heterodimer with NS2B. Interacts with non-structural protein 2A (via N-terminus). Interacts with NS4B. Interacts with unphosphorylated RNA-directed RNA polymerase NS5; this interaction stimulates RNA-directed RNA polymerase NS5 guanylyltransferase activity. NS3 interacts with host PDCD6IP; this interaction contributes to virion release. Interacts with serine protease NS3. As to quaternary structure, homodimer. Interacts with host STAT2; this interaction prevents the establishment of cellular antiviral state. Interacts with serine protease NS3. Interacts with host TRIM23; this interaction leads to NS5 ubiquitination. In terms of processing, specific enzymatic cleavages in vivo yield mature proteins. The nascent capsid protein C contains a C-terminal hydrophobic domain that act as a signal sequence for translocation of prM into the lumen of the ER. Mature capsid protein C is cleaved at a site upstream of this hydrophobic domain by NS3. prM is cleaved in post-Golgi vesicles by a host furin, releasing the mature small envelope protein M, and peptide pr. Non-structural protein 2A-alpha, a C-terminally truncated form of non-structural protein 2A, results from partial cleavage by NS3. Specific enzymatic cleavages in vivo yield mature proteins peptide 2K acts as a signal sequence and is removed from the N-terminus of NS4B by the host signal peptidase in the ER lumen. Signal cleavage at the 2K-4B site requires a prior NS3 protease-mediated cleavage at the 4A-2K site. Post-translationally, cleaved in post-Golgi vesicles by a host furin, releasing the mature small envelope protein M, and peptide pr. This cleavage is incomplete as up to 30% of viral particles still carry uncleaved prM. N-glycosylated. In terms of processing, N-glycosylated. The excreted form is glycosylated and this is required for efficient secretion of the protein from infected cells. Post-translationally, polyubiquitinated; ubiquitination is probably mediated by host TRIM23 and is prerequisite for NS5-STAT2 interaction. NS5 is not ISGylated or sumoylated. Acetylated by host KAT5. Acetylation modulates NS3 RNA-binding and unwinding activities and plays an important positive role for viral replication. In terms of processing, phosphorylated on serines residues. This phosphorylation may trigger NS5 nuclear localization.

It is found in the virion. It localises to the host nucleus. Its subcellular location is the host cytoplasm. The protein resides in the host perinuclear region. The protein localises to the secreted. It is found in the virion membrane. It localises to the host endoplasmic reticulum membrane. It catalyses the reaction Selective hydrolysis of -Xaa-Xaa-|-Yaa- bonds in which each of the Xaa can be either Arg or Lys and Yaa can be either Ser or Ala.. The enzyme catalyses RNA(n) + a ribonucleoside 5'-triphosphate = RNA(n+1) + diphosphate. It carries out the reaction a ribonucleoside 5'-triphosphate + H2O = a ribonucleoside 5'-diphosphate + phosphate + H(+). The catalysed reaction is ATP + H2O = ADP + phosphate + H(+). It catalyses the reaction a 5'-end (5'-triphosphoguanosine)-ribonucleoside in mRNA + S-adenosyl-L-methionine = a 5'-end (N(7)-methyl 5'-triphosphoguanosine)-ribonucleoside in mRNA + S-adenosyl-L-homocysteine. The enzyme catalyses a 5'-end (N(7)-methyl 5'-triphosphoguanosine)-ribonucleoside in mRNA + S-adenosyl-L-methionine = a 5'-end (N(7)-methyl 5'-triphosphoguanosine)-(2'-O-methyl-ribonucleoside) in mRNA + S-adenosyl-L-homocysteine + H(+). In terms of biological role, plays a role in virus budding by binding to the cell membrane and gathering the viral RNA into a nucleocapsid that forms the core of a mature virus particle. During virus entry, may induce genome penetration into the host cytoplasm after hemifusion induced by the surface proteins. Can migrate to the cell nucleus where it modulates host functions. Inhibits RNA silencing by interfering with host Dicer. Functionally, prevents premature fusion activity of envelope proteins in trans-Golgi by binding to envelope protein E at pH6.0. After virion release in extracellular space, gets dissociated from E dimers. Its function is as follows. Acts as a chaperone for envelope protein E during intracellular virion assembly by masking and inactivating envelope protein E fusion peptide. prM is the only viral peptide matured by host furin in the trans-Golgi network probably to avoid catastrophic activation of the viral fusion activity in acidic Golgi compartment prior to virion release. prM-E cleavage is inefficient, and many virions are only partially matured. These uncleaved prM would play a role in immune evasion. In terms of biological role, may play a role in virus budding. Exerts cytotoxic effects by activating a mitochondrial apoptotic pathway through M ectodomain. May display a viroporin activity. Binds to host cell surface receptor and mediates fusion between viral and cellular membranes. Envelope protein is synthesized in the endoplasmic reticulum in the form of heterodimer with protein prM. They play a role in virion budding in the ER, and the newly formed immature particle is covered with 60 spikes composed of heterodimer between precursor prM and envelope protein E. The virion is transported to the Golgi apparatus where the low pH causes dissociation of PrM-E heterodimers and formation of E homodimers. prM-E cleavage is inefficient, and many virions are only partially matured. These uncleaved prM would play a role in immune evasion. Functionally, involved in immune evasion, pathogenesis and viral replication. Once cleaved off the polyprotein, is targeted to three destinations: the viral replication cycle, the plasma membrane and the extracellular compartment. Essential for viral replication. Required for formation of the replication complex and recruitment of other non-structural proteins to the ER-derived membrane structures. Excreted as a hexameric lipoparticle that plays a role against host immune response. Antagonizing the complement function. Binds to the host macrophages and dendritic cells. Inhibits signal transduction originating from Toll-like receptor 3 (TLR3). Its function is as follows. Component of the viral RNA replication complex that functions in virion assembly and antagonizes the host immune response. In terms of biological role, required cofactor for the serine protease function of NS3. May have membrane-destabilizing activity and form viroporins. Displays three enzymatic activities: serine protease, NTPase and RNA helicase. NS3 serine protease, in association with NS2B, performs its autocleavage and cleaves the polyprotein at dibasic sites in the cytoplasm: C-prM, NS2A-NS2B, NS2B-NS3, NS3-NS4A, NS4A-2K and NS4B-NS5. NS3 RNA helicase binds RNA and unwinds dsRNA in the 3' to 5' direction. Also plays a role in virus assembly. Functionally, regulates the ATPase activity of the NS3 helicase activity. NS4A allows NS3 helicase to conserve energy during unwinding. Its function is as follows. Functions as a signal peptide for NS4B and is required for the interferon antagonism activity of the latter. In terms of biological role, induces the formation of ER-derived membrane vesicles where the viral replication takes place. Inhibits interferon (IFN)-induced host STAT1 phosphorylation and nuclear translocation, thereby preventing the establishment of cellular antiviral state by blocking the IFN-alpha/beta pathway. Replicates the viral (+) and (-) RNA genome, and performs the capping of genomes in the cytoplasm. NS5 methylates viral RNA cap at guanine N-7 and ribose 2'-O positions. Besides its role in RNA genome replication, also prevents the establishment of cellular antiviral state by blocking the interferon-alpha/beta (IFN-alpha/beta) signaling pathway. IFN-I induces binding of NS5 to host IFN-activated transcription factor STAT2, preventing its transcriptional activity. Host TRIM23 is the E3 ligase that interacts with and polyubiquitinates NS5 to promote its binding to STAT2 and trigger IFN-I signaling inhibition. This Yellow fever virus (isolate Ivory Coast/85-82H/1982) (YFV) protein is Genome polyprotein.